Reading from the N-terminus, the 310-residue chain is UPF0324 membrane protein VP0936 (310 aa).

The next 10 membrane-spanning stretches (helical) occupy residues 7–29, 44–63, 75–94, 104–126, 133–155, 165–187, 199–218, 228–250, 257–279, and 289–308; these read PFGLALLFCLTPFVSSPIALVIG, IASFTKKLLSYSIIGLGFGI, GIGLIIATIVGTLVIGSLIA, AYLISSGTAICGGSAIAAVAPAI, IGLALATVFVLNSLALFIFPVIG, FGTWAAIAIHDTSSVVGAASAYG, LARALWIIPVALISAVIFSR, LVIPYFIFWYCAAIAFSDFFPQL, IFTIAKQALVVCLFLIGCSISIS, and LLFGVTLWVLISTTSLSWLV.

It belongs to the UPF0324 family.

It localises to the cell membrane. In Vibrio parahaemolyticus serotype O3:K6 (strain RIMD 2210633), this protein is UPF0324 membrane protein VP0936.